Consider the following 488-residue polypeptide: Malonate-semialdehyde dehydrogenase (488 aa).

Positions 150, 152, 176, 179, 180, 229, and 251 each coordinate NAD(+). Cys-284 (nucleophile) is an active-site residue. Residue Glu-382 participates in NAD(+) binding.

It belongs to the aldehyde dehydrogenase family. IolA subfamily. Homotetramer.

The catalysed reaction is 3-oxopropanoate + NAD(+) + CoA + H2O = hydrogencarbonate + acetyl-CoA + NADH + H(+). It catalyses the reaction 2-methyl-3-oxopropanoate + NAD(+) + CoA + H2O = propanoyl-CoA + hydrogencarbonate + NADH + H(+). It participates in polyol metabolism; myo-inositol degradation into acetyl-CoA; acetyl-CoA from myo-inositol: step 7/7. Its function is as follows. Catalyzes the oxidation of malonate semialdehyde (MSA) and methylmalonate semialdehyde (MMSA) into acetyl-CoA and propanoyl-CoA, respectively. Is involved in a myo-inositol catabolic pathway. Bicarbonate, and not CO2, is the end-product of the enzymatic reaction. The sequence is that of Malonate-semialdehyde dehydrogenase from Listeria monocytogenes serotype 4b (strain F2365).